Consider the following 150-residue polypeptide: Large ribosomal subunit protein bL9 (150 aa).

It belongs to the bacterial ribosomal protein bL9 family.

Functionally, binds to the 23S rRNA. The chain is Large ribosomal subunit protein bL9 from Neisseria meningitidis serogroup C / serotype 2a (strain ATCC 700532 / DSM 15464 / FAM18).